Reading from the N-terminus, the 548-residue chain is Chaperonin GroEL (548 aa).

ATP is bound by residues 30–33 (TLGP), Lys-51, 87–91 (DGTTT), Gly-415, 479–481 (NAA), and Asp-495.

Belongs to the chaperonin (HSP60) family. Forms a cylinder of 14 subunits composed of two heptameric rings stacked back-to-back. Interacts with the co-chaperonin GroES.

It localises to the cytoplasm. The catalysed reaction is ATP + H2O + a folded polypeptide = ADP + phosphate + an unfolded polypeptide.. Its function is as follows. Together with its co-chaperonin GroES, plays an essential role in assisting protein folding. The GroEL-GroES system forms a nano-cage that allows encapsulation of the non-native substrate proteins and provides a physical environment optimized to promote and accelerate protein folding. The sequence is that of Chaperonin GroEL from Aliivibrio fischeri (strain MJ11) (Vibrio fischeri).